Reading from the N-terminus, the 1119-residue chain is Leucine-rich repeats and immunoglobulin-like domains protein 3 (1119 aa).

Residues 1 to 24 form the signal peptide; it reads MSAPSLRARAAGLGLLLCAVLGRA. In terms of domain architecture, LRRNT spans 38 to 74; sequence PSGVAAERPCPTTCRCLGDLLDCSRKRLARLPEPLPS. 15 LRR repeats span residues 75–96, 99–120, 122–142, 146–167, 168–189, 193–214, 216–237, 240–261, 264–285, 288–309, 312–333, 336–357, 360–382, 387–408, and 411–432; these read WVAR…SMSH, SLRE…GPVS, NITL…EHLK, SLET…FPAL, QLKY…YFDN, TLLV…MFKL, QLQH…TFQG, ALKS…AFWG, NMEI…WLYG, MLQE…AWEF, KLSE…SFLG, LLNT…AFRG, SLKT…NGAF, KLRR…AFTG, and ALEH…AFSQ. N-linked (GlcNAc...) asparagine glycans are attached at residues Asn122 and Asn156. The N-linked (GlcNAc...) asparagine glycan is linked to Asn274. 3 N-linked (GlcNAc...) asparagine glycosylation sites follow: Asn442, Asn469, and Asn515. The LRRCT domain occupies 444 to 495; sequence SSLLCDCQLKWLPQWVAENNFQSFVNASCAHPQLLKGRSIFAVSPDGFVCDD. Ig-like C2-type domains are found at residues 499 to 598, 603 to 692, and 697 to 783; these read PQIT…AKLT, PSFT…ATLT, and PSFL…VRLS. 2 cysteine pairs are disulfide-bonded: Cys520/Cys581 and Cys624/Cys676. N-linked (GlcNAc...) asparagine glycans are attached at residues Asn688 and Asn729. An intrachain disulfide couples Cys718 to Cys767. The helical transmembrane segment at 810-830 threads the bilayer; that stretch reads VVIIAVVCCVVGTSLVWVVII. N-linked (GlcNAc...) asparagine glycosylation is found at Asn905, Asn987, Asn999, and Asn1016. The tract at residues 1073–1093 is disordered; that stretch reads SSPDLDSGSEEDGKERTDFQE. Basic and acidic residues predominate over residues 1083 to 1093; that stretch reads EDGKERTDFQE.

In terms of assembly, interacts with EGFR, ERBB2 and ERBB4 (in vitro). Widely expressed.

It localises to the cell membrane. The protein resides in the cytoplasmic vesicle membrane. May play a role in craniofacial and inner ear morphogenesis during embryonic development. May act within the otic vesicle epithelium to control formation of the lateral semicircular canal in the inner ear, possibly by restricting the expression of NTN1. The protein is Leucine-rich repeats and immunoglobulin-like domains protein 3 (LRIG3) of Homo sapiens (Human).